The following is a 21-amino-acid chain: Nigrocin-2JDa (21 aa).

The cysteines at positions 15 and 21 are disulfide-linked.

In terms of tissue distribution, expressed by the skin glands.

Its subcellular location is the secreted. Functionally, has antibacterial activity against E.coli ATCC 25992 (MIC=16 uM), E.coli CIB 84492 (MIC=16 uM), S.aureus ATCC 25923 (MIC=16 uM) and S.aureus CIB 85462 (MIC=8 uM). Has antifungal activity against C.albicans (MIC=63 uM). Has hemolytic activity against rabbit erythrocytes. In Odorrana jingdongensis (Jingdong frog), this protein is Nigrocin-2JDa.